The sequence spans 320 residues: Cytochrome f (320 aa).

An N-terminal signal peptide occupies residues 1-35; sequence MQTRKTFSWIKEEITRSISVLLMIYIITWASISNA. Positions 36, 56, 59, and 60 each coordinate heme. A helical transmembrane segment spans residues 286–306; it reads VQGLLFFLASVILAQIFLVLK.

It belongs to the cytochrome f family. As to quaternary structure, the 4 large subunits of the cytochrome b6-f complex are cytochrome b6, subunit IV (17 kDa polypeptide, petD), cytochrome f and the Rieske protein, while the 4 small subunits are PetG, PetL, PetM and PetN. The complex functions as a dimer. Heme is required as a cofactor.

The protein localises to the plastid. The protein resides in the chloroplast thylakoid membrane. Functionally, component of the cytochrome b6-f complex, which mediates electron transfer between photosystem II (PSII) and photosystem I (PSI), cyclic electron flow around PSI, and state transitions. The sequence is that of Cytochrome f from Manihot esculenta (Cassava).